We begin with the raw amino-acid sequence, 212 residues long: TATA-box-binding protein 2 (212 aa).

Tandem repeats lie at residues 30–114 and 120–201.

It belongs to the TBP family. As to quaternary structure, belongs to the TFIID complex together with the TBP-associated factors (TAFs). Binds DNA as monomer.

The protein localises to the nucleus. Functionally, general transcription factor that functions at the core of the DNA-binding multiprotein factor TFIID. Binding of TFIID to the TATA box is the initial transcriptional step of the pre-initiation complex (PIC), playing a role in the activation of eukaryotic genes transcribed by RNA polymerase II. The polypeptide is TATA-box-binding protein 2 (Entamoeba histolytica (strain ATCC 30459 / HM-1:IMSS / ABRM)).